Reading from the N-terminus, the 143-residue chain is Meiotically up-regulated gene 128 protein (143 aa).

Has a role in meiosis. In Schizosaccharomyces pombe (strain 972 / ATCC 24843) (Fission yeast), this protein is Meiotically up-regulated gene 128 protein (mug128).